The chain runs to 136 residues: Ribosome-binding factor A (136 aa).

It belongs to the RbfA family. In terms of assembly, monomer. Binds 30S ribosomal subunits, but not 50S ribosomal subunits or 70S ribosomes.

The protein localises to the cytoplasm. In terms of biological role, one of several proteins that assist in the late maturation steps of the functional core of the 30S ribosomal subunit. Associates with free 30S ribosomal subunits (but not with 30S subunits that are part of 70S ribosomes or polysomes). Required for efficient processing of 16S rRNA. May interact with the 5'-terminal helix region of 16S rRNA. In Cellvibrio japonicus (strain Ueda107) (Pseudomonas fluorescens subsp. cellulosa), this protein is Ribosome-binding factor A.